The sequence spans 341 residues: MKRVKVIQIKGFFRVMALLAPLLLNAYLPVQASEEHAAPVAAVVAAHAEAAVDPALEPAHAEPAGHEDEKAGDVIMHHILNSHSFSFEPFGTIHLPTLPPVFGIDISITKHVVMLWIVSAILLVLFSFVGAAYRKITPKTAPSGVANTMEALVEFIRLDVAKSNIGHGYEAHLPYLLTVFMFILLCNILGLIPYGATATGNINVTLTLAVFTFFITQAASLKAHGLKGYLTHLTAGTHWSLWIIMIPIEVIGLFTKPFALTVRLFANMTAGHIVILSLIFISFILKSYVVAAAVSVPFSIFIYLLEIFVAFLQAFIFTMLSALFIGLATAHEGGEAEAAHH.

The signal sequence occupies residues 1–33 (MKRVKVIQIKGFFRVMALLAPLLLNAYLPVQAS). 6 consecutive transmembrane segments (helical) span residues 112–132 (VVML…VGAA), 173–193 (LPYL…GLIP), 195–215 (GATA…TFFI), 242–262 (WIIM…ALTV), 273–293 (IVIL…VAAA), and 307–327 (IFVA…FIGL).

Belongs to the ATPase A chain family. As to quaternary structure, F-type ATPases have 2 components, CF(1) - the catalytic core - and CF(0) - the membrane proton channel. CF(1) has five subunits: alpha(3), beta(3), gamma(1), delta(1), epsilon(1). CF(0) has four main subunits: a, b, b' and c.

It is found in the cell inner membrane. Its function is as follows. Key component of the proton channel; it plays a direct role in the translocation of protons across the membrane. The sequence is that of ATP synthase subunit a 2 from Chlorobium luteolum (strain DSM 273 / BCRC 81028 / 2530) (Pelodictyon luteolum).